Reading from the N-terminus, the 190-residue chain is Small ribosomal subunit protein mS23 (190 aa).

A2 bears the N-acetylalanine mark. K83 carries the post-translational modification N6-succinyllysine. K102 bears the N6-acetyllysine mark. Positions 137–190 are disordered; that stretch reads KARTQQEGSQVSRKSESMGVESQTALEENPPLKEVPQAQHLESPGEESKGLSPP.

The protein belongs to the mitochondrion-specific ribosomal protein mS23 family. Component of the mitochondrial ribosome small subunit (28S) which comprises a 12S rRNA and about 30 distinct proteins.

It localises to the mitochondrion. The sequence is that of Small ribosomal subunit protein mS23 from Bos taurus (Bovine).